The sequence spans 293 residues: Ribosomal protein L11 methyltransferase (293 aa).

Residues Thr-145, Gly-166, Asp-188, and Asn-230 each contribute to the S-adenosyl-L-methionine site.

It belongs to the methyltransferase superfamily. PrmA family.

It localises to the cytoplasm. The catalysed reaction is L-lysyl-[protein] + 3 S-adenosyl-L-methionine = N(6),N(6),N(6)-trimethyl-L-lysyl-[protein] + 3 S-adenosyl-L-homocysteine + 3 H(+). Methylates ribosomal protein L11. This is Ribosomal protein L11 methyltransferase from Actinobacillus pleuropneumoniae serotype 3 (strain JL03).